The following is a 147-amino-acid chain: MDGIFPSTDKMLYENVTIWREASGEYQTATTLSHYNHALPDSGSPCDEFRASLKKNGISSLLTTRGPVTCIKFQIPEDKVISLETLACLEGTIKVVGDYCYITVTTGDTVLEPPTPSQPAPTPEPAVKPQPIATRKRSGLSALLWPF.

The interval 110–133 is disordered; it reads VLEPPTPSQPAPTPEPAVKPQPIA. A compositionally biased stretch (pro residues) spans 113–128; that stretch reads PPTPSQPAPTPEPAVK.

This is an uncharacterized protein from Ictalurid herpesvirus 1 (strain Auburn) (IcHV-1).